We begin with the raw amino-acid sequence, 355 residues long: Mitochondrial import inner membrane translocase subunit TIM50 (355 aa).

A mitochondrion-targeting transit peptide spans 1-44 (MAASAAVFLRLRSGLRQGARGLCARLATPPPRAPDQAAEIGSRA). The segment at 25 to 61 (RLATPPPRAPDQAAEIGSRAGTKAQTQGPQQQRSSEG) is disordered. Topologically, residues 45-67 (GTKAQTQGPQQQRSSEGPSYAKK) are mitochondrial matrix. Positions 47–61 (KAQTQGPQQQRSSEG) are enriched in polar residues. A helical transmembrane segment spans residues 68–88 (VALWLARLLGAGGTVSVIYIF). At 89–355 (GNNAVDENGA…SRLWPRSKQP (267 aa)) the chain is on the mitochondrial intermembrane side. The FCP1 homology domain maps to 145 to 288 (YYQPPYTLVL…LDLSAFLKTI (144 aa)). Ser-343 is subject to Phosphoserine.

The protein belongs to the TIM50 family. Component of the TIM23 complex at least composed of TIMM23, TIMM17 (TIMM17A or TIMM17B) and TIMM50; within this complex, directly interacts with TIMM23. The complex interacts with the TIMM44 component of the PAM complex and with DNAJC15.

The protein localises to the mitochondrion inner membrane. In terms of biological role, essential component of the TIM23 complex, a complex that mediates the translocation of transit peptide-containing proteins across the mitochondrial inner membrane. Has some phosphatase activity in vitro; however such activity may not be relevant in vivo. The sequence is that of Mitochondrial import inner membrane translocase subunit TIM50 (TIMM50) from Bos taurus (Bovine).